The sequence spans 106 residues: UPF0060 membrane protein Bxeno_B1021 (106 aa).

4 helical membrane-spanning segments follow: residues 2-22, 30-50, 58-78, and 82-102; these read KTFL…YLPW, SIWL…LLTL, VYAA…WCVD, and PTLW…IIAF.

It belongs to the UPF0060 family.

It localises to the cell inner membrane. This is UPF0060 membrane protein Bxeno_B1021 from Paraburkholderia xenovorans (strain LB400).